Here is a 350-residue protein sequence, read N- to C-terminus: 3-isopropylmalate dehydrogenase (350 aa).

Residue G76–E87 coordinates NAD(+). Substrate is bound by residues R94, R104, R132, and D217. Residues D217, D241, and D245 each coordinate Mg(2+). G275 to N287 is a binding site for NAD(+).

It belongs to the isocitrate and isopropylmalate dehydrogenases family. LeuB type 1 subfamily. Homodimer. It depends on Mg(2+) as a cofactor. Requires Mn(2+) as cofactor.

Its subcellular location is the cytoplasm. The enzyme catalyses (2R,3S)-3-isopropylmalate + NAD(+) = 4-methyl-2-oxopentanoate + CO2 + NADH. Its pathway is amino-acid biosynthesis; L-leucine biosynthesis; L-leucine from 3-methyl-2-oxobutanoate: step 3/4. Its function is as follows. Catalyzes the oxidation of 3-carboxy-2-hydroxy-4-methylpentanoate (3-isopropylmalate) to 3-carboxy-4-methyl-2-oxopentanoate. The product decarboxylates to 4-methyl-2 oxopentanoate. This chain is 3-isopropylmalate dehydrogenase, found in Listeria monocytogenes serotype 4b (strain F2365).